The primary structure comprises 288 residues: MAPLKTSVSDTIDKIDMSLDDIIKLNKQEQNRKQLKGRYNGSFRQFRNSWGRWGAQHTSGAGNNLRSQGLRKRPYGVKTGLAMRKMASWKGISPLNHQPLVRNSPGQLVSFRKRLNPQRSPDSGVKTSSSLQRYYLRSSSYAPTNTFRSGFRMDQQRETRQATFLSRRGLKVQTLMDMDQHLDLPELSKTPPWRTSVSSGGSLTVSIDNPSAVTLPSSLGSRLPRPPFPFLTKKEGSETKVPKGVPLEFDINSVAKQSGITLNERFKILKEQRLAQAFTKGSRFVTVG.

The UAP56-binding motif motif lies at 11 to 29; it reads TIDKIDMSLDDIIKLNKQE. The tract at residues 183-202 is disordered; the sequence is DLPELSKTPPWRTSVSSGGS.

It belongs to the UIF family.

The protein localises to the nucleus. Its subcellular location is the nucleoplasm. The protein resides in the nucleus speckle. Functionally, required for mRNA export from the nucleus to the cytoplasm. Acts as an adapter that uses the ddx39b/uap56-nfx1 pathway to ensure efficient mRNA export and delivering to the nuclear pore. The sequence is that of UAP56-interacting factor (fyttd1) from Xenopus laevis (African clawed frog).